Reading from the N-terminus, the 647-residue chain is Epithelial sodium channel subunit beta (647 aa).

At 1–57 (MIHGKMKRLKRYFTRALHRIQKGPGYTYKELLVWFCDNTNTHGPKRIIKEGPKKRVM) the chain is on the cytoplasmic side. The chain crosses the membrane as a helical span at residues 58 to 78 (WFILTLVFAGLVFWQWGVLIL). Over 79–552 (TYLSYGVSVS…GGQFGFWMGG (474 aa)) the chain is Extracellular. 8 disulfides stabilise this stretch: Cys104/Cys291, Cys215/Cys222, Cys268/Cys275, Cys381/Cys468, Cys406/Cys464, Cys410/Cys460, Cys419/Cys446, and Cys421/Cys435. A helical membrane pass occupies residues 553–573 (SVLCIIEFGEIIIDCMWITIL). The Cytoplasmic segment spans residues 574–647 (KFLAWSRNRR…AEPVSSDEEN (74 aa)). Residues 586 to 647 (RKRPQYSDPP…AEPVSSDEEN (62 aa)) are disordered.

It belongs to the amiloride-sensitive sodium channel (TC 1.A.6) family. SCNN1B subfamily. As to quaternary structure, component of the heterotrimeric epithelial sodium channel (ENaC) composed of an alpha/SCNN1A, a beta/SCNN1B and a gamma/SCNN1G subunit.

It is found in the apical cell membrane. It localises to the cytoplasmic vesicle membrane. It carries out the reaction Na(+)(in) = Na(+)(out). With respect to regulation, originally identified and characterized by its inhibition by the diuretic drug amiloride. Its function is as follows. This is one of the three pore-forming subunits of the heterotrimeric epithelial sodium channel (ENaC), a critical regulator of sodium balance and fluid homeostasis. ENaC operates in epithelial tissues, where it mediates the electrodiffusion of sodium ions from extracellular fluid through the apical membrane of cells, with water following osmotically. The chain is Epithelial sodium channel subunit beta (scnn1b-a) from Xenopus laevis (African clawed frog).